Consider the following 224-residue polypeptide: Probable mitochondrial import inner membrane translocase subunit Tim17 4 (224 aa).

3 helical membrane passes run 16 to 36 (CGCA…LKGF), 60 to 80 (AIAG…CVMV), and 115 to 135 (AFVG…VATI).

It belongs to the Tim17/Tim22/Tim23 family. In terms of assembly, component of the TIM23 complex at least composed of Tim23, Tim17 (Tim17a1, Tim17a2 or Tim17b1) and a Tim50. The complex interacts with the Tim44 component of the PAM complex.

Its subcellular location is the mitochondrion inner membrane. Functionally, essential component of the TIM23 complex, a complex that mediates the translocation of transit peptide-containing proteins across the mitochondrial inner membrane. This Drosophila melanogaster (Fruit fly) protein is Probable mitochondrial import inner membrane translocase subunit Tim17 4 (Tim17a2).